The sequence spans 1007 residues: Sal-like protein 2 (1007 aa).

The interval 1–33 (MSRRKQRKPQQLISDCEGPSASENGDASEEDHP) is disordered. The C2H2-type 1; atypical zinc-finger motif lies at 34–56 (QVCAKCCAQFTDPTEFLAHQNAC). Disordered regions lie at residues 59 to 121 (DPPV…GEES), 137 to 177 (GGGL…SGHL), 220 to 243 (PASPSELPGTGTASSTKPLLPLFS), and 286 to 306 (PFSAGGVGRSHKPTPAPSPAL). Residues 70–80 (ENPNNSSASSE) show a composition bias toward low complexity. The span at 99-108 (PPDSGSSVPT) shows a compositional bias: polar residues. The span at 151–171 (PLPPESTPAPPPPPPPPPPPG) shows a compositional bias: pro residues. Ser243 carries the post-translational modification Phosphoserine. C2H2-type zinc fingers lie at residues 373–395 (HKCRFCAKVFGSDSALQIHLRSH) and 401–423 (YKCNVCGNRFTTRGNLKVHFHRH). Disordered stretches follow at residues 520–540 (KNKADENTPPGSEGSAISGVA) and 610–629 (AASGAPTTSAPAPSSSASSG). 3 C2H2-type zinc fingers span residues 631 to 653 (NQCVICLRVLSCPRALRLHYGQH), 659 to 681 (FKCKVCGRAFSTRGNLRAHFVGH), and 691 to 713 (NSCPICQKKFTNAVTLQQHVRMH). Residues 714–886 (LGGQIPNGGT…SALTPEGEAT (173 aa)) are disordered. The span at 734 to 744 (ENGSEQSTVSG) shows a compositional bias: polar residues. The segment covering 747–757 (SFPQQQSQQPS) has biased composition (low complexity). Positions 758–782 (PEEELSEEEEEEDEEEEEDVTDEDS) are enriched in acidic residues. A phosphoserine mark is found at Ser797, Ser802, and Ser806. A compositionally biased stretch (acidic residues) spans 803 to 812 (EEASGAEEEV). Positions 862–871 (GKEEGGKPER) are enriched in basic and acidic residues. Lys911 participates in a covalent cross-link: Glycyl lysine isopeptide (Lys-Gly) (interchain with G-Cter in ubiquitin). 2 C2H2-type zinc fingers span residues 911–933 (KACEVCGQAFPSQAALEEHQKTH) and 940–963 (FTCVFCRQGFLERATLKKHMLLAH).

The protein belongs to the sal C2H2-type zinc-finger protein family. Highest levels in adult brain (in different areas). Lower levels in heart; very low levels in kidney and pancreas. Expressed throughout the retina and lens vesicle as well as the periocular mesenchyme.

The protein localises to the nucleus. Functionally, probable transcription factor that plays a role in eye development before, during, and after optic fissure closure. The chain is Sal-like protein 2 (SALL2) from Homo sapiens (Human).